Consider the following 133-residue polypeptide: MSLLRTLQMQPRVITVFAEHANVGAASEILGALKTASGPKCKVQVSTMFPTLEQLIYMSEINRTAVAAQVPRLSELLQKPSFSEEFSSPLAQCTQDGVWRSQGGLWVDWEKRLLGADGQSVHELLGSSTMTID.

Residues 1–21 (MSLLRTLQMQPRVITVFAEHA) constitute a mitochondrion transit peptide. Cysteine 93 is an active-site residue.

Belongs to the FMP46 family.

It localises to the mitochondrion. Its function is as follows. Putative mitochondrial redox protein which could be involved in the reduction of small toxic molecules. In Eremothecium gossypii (strain ATCC 10895 / CBS 109.51 / FGSC 9923 / NRRL Y-1056) (Yeast), this protein is Putative redox protein FMP46, mitochondrial (FMP46).